A 164-amino-acid chain; its full sequence is Protein SprT (164 aa).

One can recognise a SprT-like domain in the interval 13 to 156; the sequence is YQQAEAFFKR…LCKRCREILV (144 aa). Histidine 69 is a Zn(2+) binding site. Glutamate 70 is an active-site residue. Residue histidine 73 coordinates Zn(2+).

The protein belongs to the SprT family. The cofactor is Zn(2+).

Its subcellular location is the cytoplasm. This Pseudomonas putida (strain ATCC 700007 / DSM 6899 / JCM 31910 / BCRC 17059 / LMG 24140 / F1) protein is Protein SprT.